A 160-amino-acid polypeptide reads, in one-letter code: Cytochrome b6-f complex subunit 4 (160 aa).

Transmembrane regions (helical) follow at residues 36–56 (LLYV…GLAV), 95–115 (LLGI…PFIE), and 131–151 (AVFL…TFPI).

The protein belongs to the cytochrome b family. PetD subfamily. In terms of assembly, the 4 large subunits of the cytochrome b6-f complex are cytochrome b6, subunit IV (17 kDa polypeptide, PetD), cytochrome f and the Rieske protein, while the 4 small subunits are PetG, PetL, PetM and PetN. The complex functions as a dimer.

Its subcellular location is the cellular thylakoid membrane. Functionally, component of the cytochrome b6-f complex, which mediates electron transfer between photosystem II (PSII) and photosystem I (PSI), cyclic electron flow around PSI, and state transitions. The polypeptide is Cytochrome b6-f complex subunit 4 (Crocosphaera subtropica (strain ATCC 51142 / BH68) (Cyanothece sp. (strain ATCC 51142))).